The primary structure comprises 588 residues: Proteasome-associated ATPase (588 aa).

Positions Met1–Arg10 are enriched in basic and acidic residues. Positions Met1–Ala22 are disordered. Residues Arg47–Pro94 adopt a coiled-coil conformation. Residue Gly276–Leu281 participates in ATP binding. The interval Tyr587–Leu588 is docks into pockets in the proteasome alpha-ring.

It belongs to the AAA ATPase family. As to quaternary structure, homohexamer. Assembles into a hexameric ring structure that caps the 20S proteasome core. Strongly interacts with the prokaryotic ubiquitin-like protein Pup through a hydrophobic interface; the interacting region of ARC lies in its N-terminal coiled-coil domain. There is one Pup binding site per ARC hexamer ring. Upon ATP-binding, the C-terminus of ARC interacts with the alpha-rings of the proteasome core, possibly by binding to the intersubunit pockets.

The protein operates within protein degradation; proteasomal Pup-dependent pathway. Functionally, ATPase which is responsible for recognizing, binding, unfolding and translocation of pupylated proteins into the bacterial 20S proteasome core particle. May be essential for opening the gate of the 20S proteasome via an interaction with its C-terminus, thereby allowing substrate entry and access to the site of proteolysis. Thus, the C-termini of the proteasomal ATPase may function like a 'key in a lock' to induce gate opening and therefore regulate proteolysis. This chain is Proteasome-associated ATPase, found in Streptomyces griseus subsp. griseus (strain JCM 4626 / CBS 651.72 / NBRC 13350 / KCC S-0626 / ISP 5235).